Reading from the N-terminus, the 138-residue chain is Thyrotropin subunit beta (138 aa).

Positions 1–20 (MTAIFLMSVLFGLACGQAMS) are cleaved as a signal peptide. 6 disulfide bridges follow: Cys-22-Cys-72, Cys-36-Cys-87, Cys-39-Cys-125, Cys-47-Cys-103, Cys-51-Cys-105, and Cys-108-Cys-115. A glycan (N-linked (GlcNAc...) asparagine) is linked at Asn-43. The propeptide occupies 133–138 (VVGLSI).

Belongs to the glycoprotein hormones subunit beta family. As to quaternary structure, heterodimer of a common alpha chain and a unique beta chain which confers biological specificity to thyrotropin, lutropin, follitropin and gonadotropin.

Its subcellular location is the secreted. In terms of biological role, indispensable for the control of thyroid structure and metabolism. This Lama glama (Llama) protein is Thyrotropin subunit beta (TSHB).